The primary structure comprises 518 residues: G-protein coupled receptor 161 (518 aa).

At 1–26 the chain is on the extracellular side; that stretch reads MNSSSDGANEGAGAAADNGPTKVAES. The N-linked (GlcNAc...) asparagine glycan is linked to Asn2. Residues 27-47 form a helical membrane-spanning segment; that stretch reads IAIIIIDILICLGNLVIVVTL. At 48 to 59 the chain is on the cytoplasmic side; that stretch reads YKKSYLLSLSNK. The helical transmembrane segment at 60 to 80 threads the bilayer; the sequence is FVFSLTFSNLLLSMLVLPFVV. The Extracellular portion of the chain corresponds to 81–97; sequence VSSILREWIFGVVWCNF. Cys95 and Cys173 are disulfide-bonded. N-linked (GlcNAc...) asparagine glycosylation occurs at Asn96. Residues 98-118 form a helical membrane-spanning segment; that stretch reads SALLYMLISSASMLTLGIIAI. Residues 119-138 lie on the Cytoplasmic side of the membrane; that stretch reads DRYYAVLYPMVYPMKITGNR. A helical membrane pass occupies residues 139–159; sequence AVLALVYVWLHSLIGCLPPLF. Over 160–185 the chain is Extracellular; that stretch reads GWSTLEFDHFKWMCVAAWHKEAGYTA. A helical transmembrane segment spans residues 186–206; it reads FWQVWCALLPFIVMMICYGFI. Topologically, residues 207-264 are cytoplasmic; it reads FRVARIKARKIHCGTVIIVQEASQKNGRKNSSTSTSSSGSRKNGFSSIVYSANQCKAL. A helical membrane pass occupies residues 265 to 285; the sequence is ITILVVIGAFVLTWGPYMIVI. The Extracellular segment spans residues 286 to 301; the sequence is STEALKGKNSVSPVLE. A helical transmembrane segment spans residues 302-322; that stretch reads TLATWLSFTSAICHPLIYGLW. Residues 323–518 are Cytoplasmic-facing; that stretch reads NKTVRKELLG…GNIETSKCDV (196 aa). Residues 429–448 are disordered; that stretch reads EVEQKNDARTMPTQPTAPSE. Positions 439-448 are enriched in polar residues; it reads MPTQPTAPSE.

It belongs to the G-protein coupled receptor 1 family.

It is found in the cell projection. It localises to the cilium membrane. The protein localises to the cell membrane. Functionally, key negative regulator of Shh signaling during neural tube development. Recruited to primary cilia and acts as a regulator of the PKA-dependent basal repression machinery in Shh signaling by increasing cAMP levels, leading to promote the PKA-dependent processing of gli3 into gli3r and repress the Shh signaling. In presence of shh, it is removed from primary cilia, preventing its activity and allowing activation of the Shh signaling. This is G-protein coupled receptor 161 (gpr161) from Xenopus tropicalis (Western clawed frog).